A 176-amino-acid polypeptide reads, in one-letter code: Zinc finger protein 428 (176 aa).

The disordered stretch occupies residues 1–152 (MTETREPTET…EEEGGTYHCT (152 aa)). A compositionally biased stretch (acidic residues) spans 16 to 46 (LEEDDEDLSPEPDSEEEEEEEEEETTDDPEY). T96 is subject to Phosphothreonine. Positions 126–138 (PSRTGETRPAGRD) are enriched in basic and acidic residues. The C2H2-type zinc finger occupies 149–171 (YHCTECEDSFDNLGELHGHFMLH).

This Mus musculus (Mouse) protein is Zinc finger protein 428 (Znf428).